A 346-amino-acid chain; its full sequence is Ribulose-5-phosphate reductase (346 aa).

Residues cysteine 45, histidine 71, glutamate 72, and glutamate 151 each coordinate Zn(2+).

It belongs to the zinc-containing alcohol dehydrogenase family. It depends on Zn(2+) as a cofactor.

It carries out the reaction D-ribitol 5-phosphate + NADP(+) = D-ribulose 5-phosphate + NADPH + H(+). It participates in cell wall biogenesis; poly(ribitol phosphate) teichoic acid biosynthesis. Functionally, catalyzes the NADPH dependent reduction of D-ribulose 5-phosphate to D-ribitol 5-phosphate. This chain is Ribulose-5-phosphate reductase, found in Streptococcus pneumoniae (strain ATCC BAA-255 / R6).